Consider the following 298-residue polypeptide: 2-dehydropantoate 2-reductase (298 aa).

NADP(+) is bound by residues 7 to 12 (GGGSVG), asparagine 98, and alanine 124. Asparagine 98 lines the substrate pocket. Lysine 179 functions as the Proton donor in the catalytic mechanism. Substrate-binding residues include asparagine 183, asparagine 187, asparagine 197, and serine 246. NADP(+) is bound at residue glutamate 258.

This sequence belongs to the ketopantoate reductase family.

Its subcellular location is the cytoplasm. It carries out the reaction (R)-pantoate + NADP(+) = 2-dehydropantoate + NADPH + H(+). The protein operates within cofactor biosynthesis; (R)-pantothenate biosynthesis; (R)-pantoate from 3-methyl-2-oxobutanoate: step 2/2. Functionally, catalyzes the NADPH-dependent reduction of ketopantoate into pantoic acid. The sequence is that of 2-dehydropantoate 2-reductase (panE) from Bacillus subtilis (strain 168).